The sequence spans 145 residues: AP-2 complex subunit sigma (145 aa).

It belongs to the adaptor complexes small subunit family. As to quaternary structure, adaptor protein complex 2 (AP-2) is a heterotetramer composed of two large adaptins (alpha-type subunit apl3 and beta-type subunit apl1), a medium chain (mu-type subunit apm4) and a small adaptin (sigma-type subunit aps2).

Its subcellular location is the cell membrane. The protein resides in the membrane. It is found in the coated pit. Component of the adaptor complexes which link clathrin to receptors in coated vesicles. Clathrin-associated protein complexes are believed to interact with the cytoplasmic tails of membrane proteins, leading to their selection and concentration. The sequence is that of AP-2 complex subunit sigma (aps2) from Emericella nidulans (strain FGSC A4 / ATCC 38163 / CBS 112.46 / NRRL 194 / M139) (Aspergillus nidulans).